The chain runs to 545 residues: MTTNYIFVTGGVVSSLGKGIAAASLAAILEARGLKVTIMKLDPYINVDPGTMSPTQHGEVFVTDDGAETDLDLGHYERFIRTRMSRRNNFTTGRIYSEVLRKERRGDYLGATIQVIPHITNAIKERIIEGGEGHDVVLVEIGGTVGDIESLPFLEAIRQMAVDVGREHTMYMHLTLVPYMAAAGEVKTKPTQHSVKELLSIGIQPDVLICRSDRAVPANERAKIALFCNVPEKAVISLKDVDSIYKIPGMLKSQGLDDYICKRFSLNAPEANLQEWEQVIYQEANPGGEVNIGMVGKYVELPDAYKSVIEALKHGGLKNRVTVNIKLIDSQDVETRGVELLKDLDAILIPGGFGYRGVEGKLMTAQYARENNIPYLGICLGMQVALMEFARNVAHMEGANSTEFVPDCKYPVVALITEWRDEEGNVEQRSEQSDLGGTMRLGSQQCQLTDGSLVRQLYGSDTIVERHRHRYEVNNMLLKQIEAAGLRVAGRSGDDQLVEIVEIPNHPWFVACQFHPEFTSTPRDGHPLFSGFVKAASEYQKRLAK.

An amidoligase domain region spans residues 1–266 (MTTNYIFVTG…DDYICKRFSL (266 aa)). CTP is bound at residue S14. S14 contributes to the UTP binding site. ATP-binding positions include 15 to 20 (SLGKGI) and D72. Residues D72 and E140 each coordinate Mg(2+). CTP contacts are provided by residues 147-149 (DIE), 187-192 (KTKPTQ), and K223. UTP contacts are provided by residues 187–192 (KTKPTQ) and K223. An ATP-binding site is contributed by 239 to 241 (KDV). The region spanning 291 to 542 (NIGMVGKYVE…VKAASEYQKR (252 aa)) is the Glutamine amidotransferase type-1 domain. G352 provides a ligand contact to L-glutamine. Catalysis depends on C379, which acts as the Nucleophile; for glutamine hydrolysis. Residues 380–383 (LGMQ), E403, and R470 contribute to the L-glutamine site. Active-site residues include H515 and E517.

The protein belongs to the CTP synthase family. In terms of assembly, homotetramer.

It catalyses the reaction UTP + L-glutamine + ATP + H2O = CTP + L-glutamate + ADP + phosphate + 2 H(+). It carries out the reaction L-glutamine + H2O = L-glutamate + NH4(+). The enzyme catalyses UTP + NH4(+) + ATP = CTP + ADP + phosphate + 2 H(+). It functions in the pathway pyrimidine metabolism; CTP biosynthesis via de novo pathway; CTP from UDP: step 2/2. Its activity is regulated as follows. Allosterically activated by GTP, when glutamine is the substrate; GTP has no effect on the reaction when ammonia is the substrate. The allosteric effector GTP functions by stabilizing the protein conformation that binds the tetrahedral intermediate(s) formed during glutamine hydrolysis. Inhibited by the product CTP, via allosteric rather than competitive inhibition. Functionally, catalyzes the ATP-dependent amination of UTP to CTP with either L-glutamine or ammonia as the source of nitrogen. Regulates intracellular CTP levels through interactions with the four ribonucleotide triphosphates. The chain is CTP synthase from Erwinia tasmaniensis (strain DSM 17950 / CFBP 7177 / CIP 109463 / NCPPB 4357 / Et1/99).